The sequence spans 541 residues: Protein yellow (541 aa).

A signal peptide spans 1-21 (MFQDKGWVLVTLIALVTPSWA). N-linked (GlcNAc...) asparagine glycosylation occurs at Asn144.

Belongs to the major royal jelly protein family.

It localises to the secreted. Functionally, controls the pigmentation pattern of the adult cuticle and larval mouth parts. This Drosophila erecta (Fruit fly) protein is Protein yellow (y).